We begin with the raw amino-acid sequence, 310 residues long: Ribose-phosphate pyrophosphokinase (310 aa).

Residues 34 to 36 (DQE) and 93 to 94 (RQ) each bind ATP. 2 residues coordinate Mg(2+): His-127 and Asp-167. Lys-190 is an active-site residue. Residues Arg-192, Asp-216, and 220-224 (DSGGT) each bind D-ribose 5-phosphate.

It belongs to the ribose-phosphate pyrophosphokinase family. Class I subfamily. In terms of assembly, homohexamer. Mg(2+) serves as cofactor.

Its subcellular location is the cytoplasm. It carries out the reaction D-ribose 5-phosphate + ATP = 5-phospho-alpha-D-ribose 1-diphosphate + AMP + H(+). The protein operates within metabolic intermediate biosynthesis; 5-phospho-alpha-D-ribose 1-diphosphate biosynthesis; 5-phospho-alpha-D-ribose 1-diphosphate from D-ribose 5-phosphate (route I): step 1/1. In terms of biological role, involved in the biosynthesis of the central metabolite phospho-alpha-D-ribosyl-1-pyrophosphate (PRPP) via the transfer of pyrophosphoryl group from ATP to 1-hydroxyl of ribose-5-phosphate (Rib-5-P). This Rhizobium meliloti (strain 1021) (Ensifer meliloti) protein is Ribose-phosphate pyrophosphokinase.